The sequence spans 672 residues: DNA ligase (672 aa).

NAD(+) contacts are provided by residues 32 to 36 (DAEYD), 81 to 82 (SL), and E113. Catalysis depends on K115, which acts as the N6-AMP-lysine intermediate. Positions 136, 173, 290, and 314 each coordinate NAD(+). Zn(2+) is bound by residues C408, C411, C426, and C432. Residues 592 to 672 (EIDSPFAGKT…EMIRLLGESS (81 aa)) enclose the BRCT domain.

This sequence belongs to the NAD-dependent DNA ligase family. LigA subfamily. Mg(2+) serves as cofactor. Requires Mn(2+) as cofactor.

It carries out the reaction NAD(+) + (deoxyribonucleotide)n-3'-hydroxyl + 5'-phospho-(deoxyribonucleotide)m = (deoxyribonucleotide)n+m + AMP + beta-nicotinamide D-nucleotide.. Its function is as follows. DNA ligase that catalyzes the formation of phosphodiester linkages between 5'-phosphoryl and 3'-hydroxyl groups in double-stranded DNA using NAD as a coenzyme and as the energy source for the reaction. It is essential for DNA replication and repair of damaged DNA. The sequence is that of DNA ligase from Yersinia enterocolitica serotype O:8 / biotype 1B (strain NCTC 13174 / 8081).